Consider the following 495-residue polypeptide: UDP-glycosyltransferase 73E1 (495 aa).

Residues serine 299, 355–356 (WA), 373–381 (HCGWNSTIE), and 395–398 (FADQ) each bind UDP-alpha-D-glucose.

Belongs to the UDP-glycosyltransferase family.

Its function is as follows. May glycosylate diterpenes or flavonols in leaves. The sequence is that of UDP-glycosyltransferase 73E1 from Stevia rebaudiana (Stevia).